Consider the following 153-residue polypeptide: Endoribonuclease YbeY (153 aa).

Zn(2+)-binding residues include H115, H119, and H125.

Belongs to the endoribonuclease YbeY family. The cofactor is Zn(2+).

The protein resides in the cytoplasm. Single strand-specific metallo-endoribonuclease involved in late-stage 70S ribosome quality control and in maturation of the 3' terminus of the 16S rRNA. This is Endoribonuclease YbeY from Blochmanniella floridana.